The following is a 105-amino-acid chain: Met repressor (105 aa).

Belongs to the MetJ family. Homodimer.

The protein localises to the cytoplasm. In terms of biological role, this regulatory protein, when combined with SAM (S-adenosylmethionine) represses the expression of the methionine regulon and of enzymes involved in SAM synthesis. This Haemophilus ducreyi (strain 35000HP / ATCC 700724) protein is Met repressor.